Here is a 244-residue protein sequence, read N- to C-terminus: Ras-related protein Rab-12 (244 aa).

The residue at position 1 (Met1) is an N-acetylmethionine. Over residues 1–10 (MDPGAALQRR) the composition is skewed to low complexity. A disordered region spans residues 1 to 37 (MDPGAALQRRAGGGGGLGAGSPALSGGQGRRRKQPPR). Phosphoserine occurs at positions 21 and 25. A GDP-binding site is contributed by Gly52. GTP contacts are provided by Gly52, Val53, Gly54, Lys55, and Thr56. GDP-binding residues include Gly54, Lys55, Thr56, and Ser57. Thr56 serves as a coordination point for Mg(2+). Short sequence motifs (switch) lie at residues 65–79 (DTFC…GVDF) and 97–114 (DTAG…YYRS). The GTP site is built by Ser73 and Thr74. Mg(2+) contacts are provided by Thr74 and Asp97. Position 100 (Gly100) interacts with GTP. At Ser106 the chain carries Phosphoserine; by LRRK2. 4 residues coordinate GDP: Asn155, Lys156, Asp158, and Cys159. 3 residues coordinate GTP: Asn155, Lys156, and Asp158. Residues Ser186, Ala187, and Lys188 each contribute to the GTP site. 2 residues coordinate GDP: Ala187 and Lys188. The disordered stretch occupies residues 225–244 (QPEPEIPPELPPPRPHVRCC). Over residues 228–238 (PEIPPELPPPR) the composition is skewed to pro residues. S-geranylgeranyl cysteine attachment occurs at residues Cys243 and Cys244.

It belongs to the small GTPase superfamily. Rab family. As to quaternary structure, interacts with RABIF. Interacts with OPTN. Interacts with LRRK2; interaction facilitates phosphorylation of Ser-106. Interacts with GDI1, GDI2, CHM and CHML; these interactions are disrupted by phosphorylation on Ser-106. Interacts with RILPL1 and RILPL2; these interactions are dependent on phosphorylation of Ser-106. Mg(2+) is required as a cofactor. Phosphorylation of Ser-106 in the switch II region by LRRK2 prevents the association of RAB regulatory proteins, including CHM, CHML and RAB GDP dissociation inhibitors GDI1 and GDI2.

Its subcellular location is the recycling endosome membrane. It localises to the lysosome membrane. It is found in the golgi apparatus membrane. The protein localises to the cytoplasmic vesicle. The protein resides in the autophagosome. It catalyses the reaction GTP + H2O = GDP + phosphate + H(+). With respect to regulation, regulated by guanine nucleotide exchange factors (GEFs) including DENND3 which promote the exchange of bound GDP for free GTP. Regulated by GTPase activating proteins (GAPs) which increase the GTP hydrolysis activity. Inhibited by GDP dissociation inhibitors (GDIs). In terms of biological role, the small GTPases Rab are key regulators of intracellular membrane trafficking, from the formation of transport vesicles to their fusion with membranes. Rabs cycle between an inactive GDP-bound form and an active GTP-bound form that is able to recruit to membranes different sets of downstream effectors directly responsible for vesicle formation, movement, tethering and fusion. RAB12 may play a role in protein transport from recycling endosomes to lysosomes regulating, for instance, the degradation of the transferrin receptor. Involved in autophagy. The chain is Ras-related protein Rab-12 from Homo sapiens (Human).